The following is a 328-amino-acid chain: MGQDLTFKRHRRLRQTAAIRNMVRETKLHIDDLIYPIFVKEGEGVRQEVPSMPNVYQLSLDQLDAEVDEIVSLGIPAIILFGVPAEKDAVGSAAYHEHGIVQQAIRQVKESYPDLTVIADTCLCQFTDHGHCGVIEEGKILNDPSLDLLARTAVSQAKAGADIIAPSNMMDGFVAAIRAGLDSAGFTDVPVMSYAVKYASAFYGPFRDAAHSSPVFGDRKTYQMDPANRLEALREARSDVEEGADFLIVKPALSYLDIIREVKNETGLPVVAYNVSGEYSMIKAASLQGWIDEKSTVLEKLISMKRAGADLILTYFAKDVARWLNEEK.

Residues Cys-122, Cys-124, and Cys-132 each coordinate Zn(2+). Lys-197 serves as the catalytic Schiff-base intermediate with substrate. Positions 207 and 219 each coordinate 5-aminolevulinate. Glu-235 is a Mg(2+) binding site. The active-site Schiff-base intermediate with substrate is the Lys-250. Residues Ser-276 and Tyr-315 each coordinate 5-aminolevulinate.

It belongs to the ALAD family. In terms of assembly, homooctamer. The cofactor is Zn(2+).

It catalyses the reaction 2 5-aminolevulinate = porphobilinogen + 2 H2O + H(+). The protein operates within porphyrin-containing compound metabolism; protoporphyrin-IX biosynthesis; coproporphyrinogen-III from 5-aminolevulinate: step 1/4. In terms of biological role, catalyzes an early step in the biosynthesis of tetrapyrroles. Binds two molecules of 5-aminolevulinate per subunit, each at a distinct site, and catalyzes their condensation to form porphobilinogen. This is Delta-aminolevulinic acid dehydratase (hemB) from Halalkalibacterium halodurans (strain ATCC BAA-125 / DSM 18197 / FERM 7344 / JCM 9153 / C-125) (Bacillus halodurans).